A 355-amino-acid polypeptide reads, in one-letter code: tRNA-specific 2-thiouridylase MnmA (355 aa).

Residues L6–S13 and L33 each bind ATP. The active-site Nucleophile is the C100. Cysteines 100 and 195 form a disulfide. Residue G123 coordinates ATP. Residues K145 to Q147 form an interaction with tRNA region. Residue C195 is the Cysteine persulfide intermediate of the active site.

It belongs to the MnmA/TRMU family.

It localises to the cytoplasm. The catalysed reaction is S-sulfanyl-L-cysteinyl-[protein] + uridine(34) in tRNA + AH2 + ATP = 2-thiouridine(34) in tRNA + L-cysteinyl-[protein] + A + AMP + diphosphate + H(+). Its function is as follows. Catalyzes the 2-thiolation of uridine at the wobble position (U34) of tRNA, leading to the formation of s(2)U34. This Borrelia garinii subsp. bavariensis (strain ATCC BAA-2496 / DSM 23469 / PBi) (Borreliella bavariensis) protein is tRNA-specific 2-thiouridylase MnmA.